A 193-amino-acid chain; its full sequence is Recombination protein RecR (193 aa).

Residues 61–76 (CASCNALSETEVSEIC) form a C4-type; degenerate zinc finger. One can recognise a Toprim domain in the interval 84-170 (SQLCMVLHPR…TFTKIAQGVP (87 aa)).

The protein belongs to the RecR family.

Its function is as follows. May play a role in DNA repair. It seems to be involved in an RecBC-independent recombinational process of DNA repair. It may act with RecF and RecO. The polypeptide is Recombination protein RecR (Helicobacter pylori (strain J99 / ATCC 700824) (Campylobacter pylori J99)).